Reading from the N-terminus, the 293-residue chain is Sec-independent protein translocase protein TatC (293 aa).

Transmembrane regions (helical) follow at residues 35–55 (AAIA…QPFI), 87–107 (LLKV…LYQA), 123–143 (LFGF…ISYF), 173–193 (ILKF…LVGI), 204–224 (ILKS…LTAP), and 228–248 (IMMM…AIGI).

The protein belongs to the TatC family. As to quaternary structure, the Tat system comprises two distinct complexes: a TatABC complex, containing multiple copies of TatA, TatB and TatC subunits, and a separate TatA complex, containing only TatA subunits. Substrates initially bind to the TatABC complex, which probably triggers association of the separate TatA complex to form the active translocon.

The protein resides in the cell membrane. Functionally, part of the twin-arginine translocation (Tat) system that transports large folded proteins containing a characteristic twin-arginine motif in their signal peptide across membranes. Together with TatB, TatC is part of a receptor directly interacting with Tat signal peptides. The sequence is that of Sec-independent protein translocase protein TatC from Rothia mucilaginosa (strain DY-18) (Stomatococcus mucilaginosus).